The chain runs to 123 residues: Small ribosomal subunit protein uS13 (123 aa).

The disordered stretch occupies residues 96–123 (GLPVRGQRTKTNARTRKGPKKTVAGKKK).

Belongs to the universal ribosomal protein uS13 family. In terms of assembly, part of the 30S ribosomal subunit. Forms a loose heterodimer with protein S19. Forms two bridges to the 50S subunit in the 70S ribosome.

Its function is as follows. Located at the top of the head of the 30S subunit, it contacts several helices of the 16S rRNA. In the 70S ribosome it contacts the 23S rRNA (bridge B1a) and protein L5 of the 50S subunit (bridge B1b), connecting the 2 subunits; these bridges are implicated in subunit movement. Contacts the tRNAs in the A and P-sites. This Nocardia farcinica (strain IFM 10152) protein is Small ribosomal subunit protein uS13.